We begin with the raw amino-acid sequence, 431 residues long: Serine/threonine-protein kinase SSN3 (431 aa).

Residues 27–355 (YQIIGYIAAG…ADNALVHPYF (329 aa)) enclose the Protein kinase domain. Residues 33–41 (IAAGTYGKV) and Lys59 each bind ATP. The active-site Proton acceptor is the Asp174. Positions 397–431 (RHGGAYDDQHNNSNNNTNNSLNANNANNVPRKRAR) are disordered. Residues 407-424 (NNSNNNTNNSLNANNANN) show a composition bias toward low complexity.

This sequence belongs to the protein kinase superfamily. CMGC Ser/Thr protein kinase family. CDC2/CDKX subfamily. Component of the srb8-11 complex, a regulatory module of the Mediator complex. It depends on Mg(2+) as a cofactor.

The protein localises to the nucleus. It carries out the reaction L-seryl-[protein] + ATP = O-phospho-L-seryl-[protein] + ADP + H(+). It catalyses the reaction L-threonyl-[protein] + ATP = O-phospho-L-threonyl-[protein] + ADP + H(+). The catalysed reaction is [DNA-directed RNA polymerase] + ATP = phospho-[DNA-directed RNA polymerase] + ADP + H(+). Component of the srb8-11 complex. The srb8-11 complex is a regulatory module of the Mediator complex which is itself dependent transcription. The srb8-11 complex may be involved in the transcriptional repression of a subset of genes regulated by Mediator. It may inhibit the association of the Mediator complex with RNA polymerase II to form the holoenzyme complex. The srb8-11 complex phosphorylates the C-terminal domain (CTD) of the largest subunit of RNA polymerase II. This Scheffersomyces stipitis (strain ATCC 58785 / CBS 6054 / NBRC 10063 / NRRL Y-11545) (Yeast) protein is Serine/threonine-protein kinase SSN3 (SSN3).